Reading from the N-terminus, the 209-residue chain is Small ribosomal subunit protein uS5 (209 aa).

Positions 1 to 11 (MTQPNTQTTPN) are enriched in polar residues. The interval 1–55 (MTQPNTQTTPNDVPAAAEGQQEQQQQQRRGGGRERRGGGRRGDRRGQERDSEWQE) is disordered. Residues 18-28 (EGQQEQQQQQR) show a composition bias toward low complexity. Residues 31–55 (GGRERRGGGRRGDRRGQERDSEWQE) show a composition bias toward basic and acidic residues. The 64-residue stretch at 53–116 (WQERVVQIRR…ADGKKHLVKV (64 aa)) folds into the S5 DRBM domain.

The protein belongs to the universal ribosomal protein uS5 family. In terms of assembly, part of the 30S ribosomal subunit. Contacts proteins S4 and S8.

In terms of biological role, with S4 and S12 plays an important role in translational accuracy. Functionally, located at the back of the 30S subunit body where it stabilizes the conformation of the head with respect to the body. The chain is Small ribosomal subunit protein uS5 from Prochlorococcus marinus (strain MIT 9313).